Here is a 158-residue protein sequence, read N- to C-terminus: Large ribosomal subunit protein bL21 (158 aa).

Positions 106 to 158 (SKPKKAAAKPIKEEATAAKGTKDTAVEKKAEKTAEKKTASQKKAAVASKSKKD) are disordered. The segment covering 115-143 (PIKEEATAAKGTKDTAVEKKAEKTAEKKT) has biased composition (basic and acidic residues). The span at 146-158 (QKKAAVASKSKKD) shows a compositional bias: low complexity.

It belongs to the bacterial ribosomal protein bL21 family. In terms of assembly, part of the 50S ribosomal subunit. Contacts protein L20.

This protein binds to 23S rRNA in the presence of protein L20. This Bartonella tribocorum (strain CIP 105476 / IBS 506) protein is Large ribosomal subunit protein bL21.